A 117-amino-acid chain; its full sequence is Small ribosomal subunit protein bS6 (117 aa).

This sequence belongs to the bacterial ribosomal protein bS6 family.

Binds together with bS18 to 16S ribosomal RNA. The sequence is that of Small ribosomal subunit protein bS6 from Trichodesmium erythraeum (strain IMS101).